The primary structure comprises 504 residues: MTEQKYIVALDQGTTSSRAVILDHDANIVSVSQREFTQIYPEAGWVEHDPLEIYATQSSTLVETLAKAGIRSDQIAGIGITNQRETTIVWNKETGKPVYNAIVWQCRRTADTCEKLKEAGLEEYIRENTGLVVDPYFSGTKIKWILDNVEGAREDAEAGKLLFGTVDTWLVWKMTQGRVHVTDYTNASRTMVFNINTLQWDEKLLKELDIPLSMMPEVKSSSEVYGETNIGGKGGTRIPIAGIAGDQQAALYGQMCVEQGQAKNTYGTGCFLLMNTGKEKVTSRNGLLTTLACGPRGEASYALEGAVFMGGASIQWLRDEMKLLADAKDSEYFATKVDTSNGVYVVPAFTGLGAPYWDAYARGTIVGLTRGCGSNHIIRATLESIAYQTRDVIDAMQADSGIKLSALRVDGGAVANNFLMQFQSDVLDVAVHRSKVTEVTALGAAYLAGLAVGFWNGLDELADKAVIDRSFEPHHDEEKRNQRYRGWKRAVKCAQSWAELHDEE.

Residue threonine 14 participates in ADP binding. ATP is bound by residues threonine 14, threonine 15, and serine 16. A sn-glycerol 3-phosphate-binding site is contributed by threonine 14. Residue arginine 18 coordinates ADP. Positions 84, 85, 136, and 246 each coordinate sn-glycerol 3-phosphate. Residues arginine 84, glutamate 85, tyrosine 136, aspartate 246, and glutamine 247 each contribute to the glycerol site. ADP is bound by residues threonine 268 and glycine 311. The ATP site is built by threonine 268, glycine 311, glutamine 315, and glycine 412. ADP contacts are provided by glycine 412 and asparagine 416.

This sequence belongs to the FGGY kinase family.

The enzyme catalyses glycerol + ATP = sn-glycerol 3-phosphate + ADP + H(+). It participates in polyol metabolism; glycerol degradation via glycerol kinase pathway; sn-glycerol 3-phosphate from glycerol: step 1/1. With respect to regulation, inhibited by fructose 1,6-bisphosphate (FBP). In terms of biological role, key enzyme in the regulation of glycerol uptake and metabolism. Catalyzes the phosphorylation of glycerol to yield sn-glycerol 3-phosphate. This chain is Glycerol kinase, found in Aliivibrio fischeri (strain MJ11) (Vibrio fischeri).